The primary structure comprises 375 residues: Chaperone protein DnaJ (375 aa).

Residues 5–70 enclose the J domain; sequence DYYEVLGVER…SKRAAFDQYG (66 aa). The CR-type zinc-finger motif lies at 134–212; the sequence is GTTVSIRVPT…CHGEGRVEEY (79 aa). Zn(2+) is bound by residues Cys-147, Cys-150, Cys-164, Cys-167, Cys-186, Cys-189, Cys-200, and Cys-203. CXXCXGXG motif repeat units follow at residues 147–154, 164–171, 186–193, and 200–207; these read CQPCDGSG, CPTCGGIG, CPRCHGQG, and CTSCHGEG.

It belongs to the DnaJ family. In terms of assembly, homodimer. Requires Zn(2+) as cofactor.

Its subcellular location is the cytoplasm. Participates actively in the response to hyperosmotic and heat shock by preventing the aggregation of stress-denatured proteins and by disaggregating proteins, also in an autonomous, DnaK-independent fashion. Unfolded proteins bind initially to DnaJ; upon interaction with the DnaJ-bound protein, DnaK hydrolyzes its bound ATP, resulting in the formation of a stable complex. GrpE releases ADP from DnaK; ATP binding to DnaK triggers the release of the substrate protein, thus completing the reaction cycle. Several rounds of ATP-dependent interactions between DnaJ, DnaK and GrpE are required for fully efficient folding. Also involved, together with DnaK and GrpE, in the DNA replication of plasmids through activation of initiation proteins. This Pseudomonas putida (strain ATCC 47054 / DSM 6125 / CFBP 8728 / NCIMB 11950 / KT2440) protein is Chaperone protein DnaJ.